The chain runs to 1207 residues: Dermatan-sulfate epimerase-like protein (1207 aa).

Residues 1–22 (MAFMFTEHLLFLTLMMCSFSTC) form the signal peptide. N-linked (GlcNAc...) asparagine glycosylation is found at asparagine 28, asparagine 661, asparagine 683, and asparagine 704. 2 consecutive transmembrane segments (helical) span residues 761–781 (FPFGFKFNIAVGFILCISLVI) and 798–818 (CVLILVIALWFIELLDVWSTC). Asparagine 869 is a glycosylation site (N-linked (GlcNAc...) asparagine).

Belongs to the dermatan-sulfate isomerase family.

It is found in the membrane. This Mus musculus (Mouse) protein is Dermatan-sulfate epimerase-like protein (Dsel).